The sequence spans 389 residues: GDP-fucose protein O-fucosyltransferase 1 (389 aa).

An N-terminal signal peptide occupies residues 1 to 21 (MRVSKVLTLASFISVCSYSEA). N-linked (GlcNAc...) asparagine glycosylation occurs at N24. The cysteines at positions 35 and 37 are disulfide-linked. A substrate-binding site is contributed by 40–43 (RFGN). A disulfide bond links C119 and C135. 238–240 (HLR) serves as a coordination point for substrate. 2 disulfide bridges follow: C249-C281 and C266-C353. Residue 356 to 357 (TF) coordinates substrate.

Belongs to the glycosyltransferase 65 family. In terms of assembly, monomer.

It localises to the endoplasmic reticulum. It carries out the reaction L-seryl-[protein] + GDP-beta-L-fucose = 3-O-(alpha-L-fucosyl)-L-seryl-[protein] + GDP + H(+). The catalysed reaction is L-threonyl-[protein] + GDP-beta-L-fucose = 3-O-(alpha-L-fucosyl)-L-threonyl-[protein] + GDP + H(+). Its pathway is protein modification; protein glycosylation. Catalyzes the reaction that attaches fucose through an O-glycosidic linkage to a conserved serine or threonine residue found in the consensus sequence C2-X(4,5)-[S/T]-C3 of EGF domains, where C2 and C3 are the second and third conserved cysteines. Specifically uses GDP-fucose as donor substrate and proper disulfide pairing of the substrate EGF domains is required for fucose transfer. This chain is GDP-fucose protein O-fucosyltransferase 1, found in Caenorhabditis elegans.